A 24-amino-acid chain; its full sequence is Fibrinogen gamma chain (24 aa).

Heterohexamer; disulfide linked. Contains 2 sets of 3 non-identical chains (alpha, beta and gamma). The 2 heterotrimers are in head to head conformation with the N-termini in a small central domain. In terms of processing, conversion of fibrinogen to fibrin is triggered by thrombin, which cleaves fibrinopeptides A and B from alpha and beta chains, and thus exposes the N-terminal polymerization sites responsible for the formation of the soft clot. The soft clot is converted into the hard clot by factor XIIIA which catalyzes the epsilon-(gamma-glutamyl)lysine cross-linking between gamma chains (stronger) and between alpha chains (weaker) of different monomers.

The protein localises to the secreted. In terms of biological role, together with fibrinogen alpha (FGA) and fibrinogen beta (FGB), polymerizes to form an insoluble fibrin matrix. Has a major function in hemostasis as one of the primary components of blood clots. In addition, functions during the early stages of wound repair to stabilize the lesion and guide cell migration during re-epithelialization. Was originally thought to be essential for platelet aggregation, based on in vitro studies using anticoagulated blood. However, subsequent studies have shown that it is not absolutely required for thrombus formation in vivo. Enhances expression of SELP in activated platelets via an ITGB3-dependent pathway. Maternal fibrinogen is essential for successful pregnancy. Fibrin deposition is also associated with infection, where it protects against IFNG-mediated hemorrhage. May also facilitate the antibacterial immune response via both innate and T-cell mediated pathways. In Canis lupus familiaris (Dog), this protein is Fibrinogen gamma chain (FGG).